Reading from the N-terminus, the 610-residue chain is Menin (610 aa).

The tract at residues 214-390 is interaction with FANCD2; it reads GVAERSWLYL…SLLEAGEERP (177 aa). A disordered region spans residues 460–552; it reads REAEAAEAEE…SPPPEGPVLT (93 aa). Positions 484–500 are enriched in basic and acidic residues; the sequence is RRESKPEEPPPPKKPAL. A phosphoserine mark is found at Ser-487 and Ser-543. Thr-594 carries the phosphothreonine modification.

In terms of assembly, component of the MLL-HCF complex, at least composed of KMT2A/MLL1, MEN1, ASH2L, RBBP5, DPY30, WDR5, HCFC1 and HCFC2. Component of the menin-associated histone methyltransferase complex, at least composed of KMT2B/MLL4, MEN1, ASH2L, RBBP5, DPY30 and WDR5. Interacts with POLR2B. Interacts with POLR2A phosphorylated at 'Ser-5', but not with the unphosphorylated, nor 'Ser-2' phosphorylated POLR2A forms. Interacts with FANCD2 and DBF4. Interacts with SMAD3, but not with SMAD2, nor SMAD4. Directly interacts with NFKB1, NFKB2 and RELA. Interacts with JUND (via MBM motif); inhibits the interaction of JUND with MAPK10 and the phosphorylation of JUND by MAP kinases MAPK8 and MAPK10. Interacts with KMT2A (via MBM motif). The KMT2A-MEN1 complex interacts with PSIP1 with a greater affinity as MEN1 enhances interaction of KMT2A with PSIP1. As to expression, widely expressed, including in the pituitary, brain, large intestine, spleen, kidney, adrenal gland, ovary, testis, thymus, lung, epididymis, bone marrow, pancreatic islets and placenta.

The protein resides in the nucleus. Its function is as follows. Essential component of a MLL/SET1 histone methyltransferase (HMT) complex, a complex that specifically methylates 'Lys-4' of histone H3 (H3K4). Functions as a transcriptional regulator. Binds to the TERT promoter and represses telomerase expression. Represses JUND-mediated transcriptional activation on AP1 sites, as well as that mediated by NFKB subunit RELA. Positively regulates HOXC8 and HOXC6 gene expression. May be involved in normal hematopoiesis through the activation of HOXA9 expression. May be involved in DNA repair. Plays a role in TGFB1-mediated inhibition of cell-proliferation, possibly regulating SMAD3 transcriptional activity. This Rattus norvegicus (Rat) protein is Menin (Men1).